A 147-amino-acid chain; its full sequence is Putative HTH-type transcriptional regulator slr0846 (147 aa).

One can recognise an HTH rrf2-type domain in the interval 2–130; sequence KLTTKSHYSV…YSITLADLYY (129 aa).

The sequence is that of Putative HTH-type transcriptional regulator slr0846 from Synechocystis sp. (strain ATCC 27184 / PCC 6803 / Kazusa).